A 762-amino-acid chain; its full sequence is Semaphorin-4A (762 aa).

An N-terminal signal peptide occupies residues 1–32; sequence MALPALGLDSWSFLGLFLFQLLLLFLPPATTA. At 33–684 the chain is on the extracellular side; it reads GREGQGPTPR…LAAPKSYWPH (652 aa). The 459-residue stretch at 37–495 folds into the Sema domain; that stretch reads QGPTPRVKYH…FSGGIWKVPR (459 aa). A disulfide bond links Cys-114 and Cys-125. Residues Asn-121 and Asn-136 are each glycosylated (N-linked (GlcNAc...) asparagine). Cystine bridges form between Cys-143–Cys-152, Cys-270–Cys-380, and Cys-294–Cys-340. Asn-314 and Asn-497 each carry an N-linked (GlcNAc...) asparagine glycan. The region spanning 497–544 is the PSI domain; that stretch reads NCSVYESCMDCVLARDPHCAWDPESQTCRLLPTPILKSWKQDMQQGNP. Disulfide bonds link Cys-498–Cys-515 and Cys-507–Cys-524. An Ig-like C2-type domain is found at 574-632; it reads NSILELPCPQSSALASYHWSHGVEAIPEAPSTVYNGSLLLLLRDGAGGLYQCWATENDF. The N-linked (GlcNAc...) asparagine glycan is linked to Asn-608. The helical transmembrane segment at 685–705 threads the bilayer; it reads FLTVTVLLALVLSGALVTFLV. Topologically, residues 706–762 are cytoplasmic; it reads SPLGALRARGKVQGCGTLPSREKAPLSSEQCLQPSKEGRTSASDMDADNNLQGTEVA. The disordered stretch occupies residues 722-762; it reads TLPSREKAPLSSEQCLQPSKEGRTSASDMDADNNLQGTEVA.

The protein belongs to the semaphorin family. As to quaternary structure, interacts with PLXNB1, PLXNB2, PLXNB3, PLXND1 and TIMD2.

The protein resides in the cell membrane. In terms of biological role, cell surface receptor for PLXNB1, PLXNB2, PLXNB3 and PLXND1 that plays an important role in cell-cell signaling. Regulates glutamatergic and GABAergic synapse development. Promotes the development of inhibitory synapses in a PLXNB1-dependent manner and promotes the development of excitatory synapses in a PLXNB2-dependent manner. Plays a role in priming antigen-specific T-cells, promotes differentiation of Th1 T-helper cells, and thereby contributes to adaptive immunity. Promotes phosphorylation of TIMD2. Inhibits angiogenesis. Promotes axon growth cone collapse. Inhibits axonal extension by providing local signals to specify territories inaccessible for growing axons. In Bos taurus (Bovine), this protein is Semaphorin-4A (SEMA4A).